We begin with the raw amino-acid sequence, 124 residues long: Fluoride-specific ion channel FluC (124 aa).

Transmembrane regions (helical) follow at residues 36–56 (VGTM…VVVL), 63–83 (YAPF…AFSL), and 99–119 (AYVG…MAAV). The Na(+) site is built by Gly73 and Thr76.

Belongs to the fluoride channel Fluc/FEX (TC 1.A.43) family.

Its subcellular location is the cell inner membrane. The enzyme catalyses fluoride(in) = fluoride(out). Its activity is regulated as follows. Na(+) is not transported, but it plays an essential structural role and its presence is essential for fluoride channel function. Fluoride-specific ion channel. Important for reducing fluoride concentration in the cell, thus reducing its toxicity. In Cereibacter sphaeroides (strain ATCC 17029 / ATH 2.4.9) (Rhodobacter sphaeroides), this protein is Fluoride-specific ion channel FluC.